The sequence spans 413 residues: Arginine biosynthesis bifunctional protein ArgJ (413 aa).

Thr160, Lys186, Thr197, Glu277, Asn408, and Thr413 together coordinate substrate. The active-site Nucleophile is the Thr197.

It belongs to the ArgJ family. Heterotetramer of two alpha and two beta chains.

The protein localises to the cytoplasm. It carries out the reaction N(2)-acetyl-L-ornithine + L-glutamate = N-acetyl-L-glutamate + L-ornithine. The catalysed reaction is L-glutamate + acetyl-CoA = N-acetyl-L-glutamate + CoA + H(+). Its pathway is amino-acid biosynthesis; L-arginine biosynthesis; L-ornithine and N-acetyl-L-glutamate from L-glutamate and N(2)-acetyl-L-ornithine (cyclic): step 1/1. The protein operates within amino-acid biosynthesis; L-arginine biosynthesis; N(2)-acetyl-L-ornithine from L-glutamate: step 1/4. Catalyzes two activities which are involved in the cyclic version of arginine biosynthesis: the synthesis of N-acetylglutamate from glutamate and acetyl-CoA as the acetyl donor, and of ornithine by transacetylation between N(2)-acetylornithine and glutamate. This Prochlorococcus marinus (strain SARG / CCMP1375 / SS120) protein is Arginine biosynthesis bifunctional protein ArgJ.